The primary structure comprises 274 residues: Diaminopimelate epimerase (274 aa).

Residues N11, Q44, and N64 each contribute to the substrate site. The Proton donor role is filled by C73. Substrate is bound by residues 74 to 75 (GN), N157, N190, and 208 to 209 (ER). The active-site Proton acceptor is C217. Residue 218–219 (GS) coordinates substrate.

This sequence belongs to the diaminopimelate epimerase family. As to quaternary structure, homodimer (Potential). Previously DapF has been proposed to be a monomer, however it seems that it adopts a dimeric structure.

The protein localises to the cytoplasm. The enzyme catalyses (2S,6S)-2,6-diaminopimelate = meso-2,6-diaminopimelate. It participates in amino-acid biosynthesis; L-lysine biosynthesis via DAP pathway; DL-2,6-diaminopimelate from LL-2,6-diaminopimelate: step 1/1. Its activity is regulated as follows. Inhibited by LL-aziridino (LL-AziDAP), DL-aziridino (DL-AziDAP). Also inhibited by (2S,3R,6S)-2,6-diamino-3-fluoropimelate (L,L-3-fluoro-DAP) and (2R,3S,6S)-2,6-diamino-3-fluoropimelate (D,L-3-fluoro-DAP). Its function is as follows. Catalyzes the stereoinversion of LL-2,6-diaminopimelate (L,L-DAP) to meso-diaminopimelate (meso-DAP), a precursor of L-lysine and an essential component of the bacterial peptidoglycan. Only accepts DAP isomers with the L configuration. The protein is Diaminopimelate epimerase of Haemophilus influenzae (strain ATCC 51907 / DSM 11121 / KW20 / Rd).